A 187-amino-acid chain; its full sequence is Accessory gene regulator protein B (187 aa).

5 consecutive transmembrane segments (helical) span residues 49-69, 82-102, 107-127, 143-163, and 164-184; these read LAYILNIFIFTLITNISFYLI, FWCYIESITLFIVLPLLVLHF, TLMMFLALLSVGVVIKYAPAA, YFSIIISTILFIITLFVKEPY, and TQFIQLGIIIQAITLLPIYYS.

Belongs to the AgrB family.

The protein localises to the cell membrane. Functionally, essential for the production of a quorum sensing system signal molecule, the autoinducing peptide (AIP). This quorum sensing system is responsible for the regulation of the expression of virulence factor genes. Involved in the proteolytic processing of AgrD, the precursor of AIP. The sequence is that of Accessory gene regulator protein B from Staphylococcus aureus (strain MRSA252).